Reading from the N-terminus, the 987-residue chain is Centrosomal protein of 120 kDa (987 aa).

One can recognise a C2 1 domain in the interval 1–112 (MVSKSDQLLI…QETKQAPKWY (112 aa)). The tract at residues 352-408 (KTQNEHEPHHSKKRVLTPIKENTHTGPQSPSESPVPPHNQSPPTKDDATESEVESLL) is disordered. The C2 2 domain occupies 438–567 (SEAASGQKIA…LSSEKTRFLG (130 aa)). Residues 670–919 (ENQLKQKELA…RLRQQEQKQY (250 aa)) adopt a coiled-coil conformation. Over residues 912-926 (RQQEQKQYPDSREIA) the composition is skewed to basic and acidic residues. A disordered region spans residues 912 to 937 (RQQEQKQYPDSREIASGKMDGPHGSA). Phosphoserine is present on S936.

Belongs to the CEP120 family. Interacts with TACC2 and TACC3. Interacts with CCDC52.

It localises to the cytoplasm. The protein localises to the cytoskeleton. Its subcellular location is the microtubule organizing center. It is found in the centrosome. Its function is as follows. Plays a role in the microtubule-dependent coupling of the nucleus and the centrosome. Involved in the processes that regulate centrosome-mediated interkinetic nuclear migration (INM) of neural progenitors and for proper positioning of neurons during brain development. Also implicated in the migration and selfrenewal of neural progenitors. May play a role in centriole duplication during mitosis. Required for the recruitment of CEP295 to the proximal end of new-born centrioles at the centriolar microtubule wall during early S phase in a PLK4-dependent manner. The protein is Centrosomal protein of 120 kDa (CEP120) of Bos taurus (Bovine).